The following is a 256-amino-acid chain: uncharacterized protein (256 aa).

This is an uncharacterized protein from Bacillus subtilis (strain 168).